The chain runs to 458 residues: Bone morphogenetic protein 3 (458 aa).

The signal sequence occupies residues 1–23 (MAECRPWLVLWVGCCGCLCLALG). A propeptide spanning residues 24-348 (ELLNDGLLAV…EQTLKKARRK (325 aa)) is cleaved from the precursor. N107 carries an N-linked (GlcNAc...) asparagine glycan. Disordered stretches follow at residues 244 to 275 (DSVV…KKRS) and 303 to 335 (ERKP…SQTL). Residues 320-329 (NKKKLRKGSR) show a composition bias toward basic residues. Intrachain disulfides connect C356/C423, C385/C455, and C389/C457. A glycan (N-linked (GlcNAc...) asparagine) is linked at N449.

Belongs to the TGF-beta family. Homodimer. Can form heterodimers with ADMP, BMP-2-I and/or BMP-2-II, and DERRIERE.

The protein localises to the secreted. In terms of biological role, dorsalizing factor. Antagonizes mesoderm formation by ventralizing BMPs. This is Bone morphogenetic protein 3 (bmp3) from Xenopus laevis (African clawed frog).